Consider the following 78-residue polypeptide: Acyl carrier protein (78 aa).

The 76-residue stretch at 2–77 (SDIEQRVKKI…QAIDYVNANL (76 aa)) folds into the Carrier domain. O-(pantetheine 4'-phosphoryl)serine is present on Ser37.

This sequence belongs to the acyl carrier protein (ACP) family. In terms of processing, 4'-phosphopantetheine is transferred from CoA to a specific serine of apo-ACP by AcpS. This modification is essential for activity because fatty acids are bound in thioester linkage to the sulfhydryl of the prosthetic group.

The protein resides in the cytoplasm. It functions in the pathway lipid metabolism; fatty acid biosynthesis. Carrier of the growing fatty acid chain in fatty acid biosynthesis. This Methylobacillus flagellatus (strain ATCC 51484 / DSM 6875 / VKM B-1610 / KT) protein is Acyl carrier protein.